Reading from the N-terminus, the 196-residue chain is Peptidyl-tRNA hydrolase (196 aa).

Tyr17 is a tRNA binding site. His22 (proton acceptor) is an active-site residue. Phe68, Asn70, and Asn116 together coordinate tRNA.

The protein belongs to the PTH family. Monomer.

Its subcellular location is the cytoplasm. It carries out the reaction an N-acyl-L-alpha-aminoacyl-tRNA + H2O = an N-acyl-L-amino acid + a tRNA + H(+). Functionally, hydrolyzes ribosome-free peptidyl-tRNAs (with 1 or more amino acids incorporated), which drop off the ribosome during protein synthesis, or as a result of ribosome stalling. Its function is as follows. Catalyzes the release of premature peptidyl moieties from peptidyl-tRNA molecules trapped in stalled 50S ribosomal subunits, and thus maintains levels of free tRNAs and 50S ribosomes. This is Peptidyl-tRNA hydrolase from Photorhabdus laumondii subsp. laumondii (strain DSM 15139 / CIP 105565 / TT01) (Photorhabdus luminescens subsp. laumondii).